The chain runs to 3083 residues: Genome polyprotein (3083 aa).

One can recognise a Peptidase S30 domain in the interval 173–313; that stretch reads VVRSASVNNL…VFFYDDVDHY (141 aa). Active-site for P1 proteinase activity residues include His226, Glu235, and Ser267. Positions 365–368 match the Involved in interaction with stylet and aphid transmission motif; that stretch reads KLSC. Positions 621–623 match the Involved in virions binding and aphid transmission motif; it reads PTK. The Peptidase C6 domain maps to 647 to 769; the sequence is MYIAKEGYCY…QSEMKHYRVG (123 aa). Catalysis depends on for helper component proteinase activity residues Cys655 and His728. Positions 1239–1391 constitute a Helicase ATP-binding domain; it reads EIASSNEGEF…TQFAVKVKTE (153 aa). 1252-1259 is a binding site for ATP; the sequence is GAVGSGKS. Positions 1341 to 1344 match the DECH box motif; sequence DECH. Residues 1410-1569 form the Helicase C-terminal domain; the sequence is DMIQHGNNIL…GLSVTTHGVS (160 aa). A Nuclear localization signal motif is present at residues 1894–1903; that stretch reads KRGKVKGNNS. At Tyr1918 the chain carries O-(5'-phospho-RNA)-tyrosine. The Peptidase C4 domain occupies 2045–2263; it reads SKSIYKGVRD…IAWGLLNLVD (219 aa). Active-site for nuclear inclusion protein A activity residues include His2090, Asp2125, and Cys2195. One can recognise a RdRp catalytic domain in the interval 2529 to 2653; that stretch reads WLYCHADGSQ…AVKDEDSGLL (125 aa). The disordered stretch occupies residues 2805–2854; the sequence is SDTQTKEADAGAAKRDKDEEKEKKKDVASSSANEKTMTATAKDKDVNAGS. Over residues 2808-2831 the composition is skewed to basic and acidic residues; that stretch reads QTKEADAGAAKRDKDEEKEKKKDV. Positions 2832–2843 are enriched in polar residues; that stretch reads ASSSANEKTMTA.

The protein belongs to the potyviridae genome polyprotein family. Interacts with host eIF4E protein (via cap-binding region); this interaction mediates the translation of the VPg-viral RNA conjugates. Part of a complex that comprises VPg, RNA, host EIF4E and EIF4G; this interaction mediates the translation of the VPg-viral RNA conjugates. In terms of processing, VPg is uridylylated by the polymerase and is covalently attached to the 5'-end of the genomic RNA. This uridylylated form acts as a nucleotide-peptide primer for the polymerase. Potyviral RNA is expressed as two polyproteins which undergo post-translational proteolytic processing. Genome polyprotein is processed by NIa-pro, P1 and HC-pro proteinases resulting in the production of at least ten individual proteins. P3N-PIPO polyprotein is cleaved by P1 and HC-pro proteinases resulting in the production of three individual proteins. The P1 proteinase and the HC-pro cleave only their respective C-termini autocatalytically. 6K1 is essential for proper proteolytic separation of P3 from CI.

The protein resides in the host cytoplasmic vesicle. Its subcellular location is the host nucleus. It localises to the virion. The catalysed reaction is RNA(n) + a ribonucleoside 5'-triphosphate = RNA(n+1) + diphosphate. The enzyme catalyses Hydrolyzes glutaminyl bonds, and activity is further restricted by preferences for the amino acids in P6 - P1' that vary with the species of potyvirus, e.g. Glu-Xaa-Xaa-Tyr-Xaa-Gln-|-(Ser or Gly) for the enzyme from tobacco etch virus. The natural substrate is the viral polyprotein, but other proteins and oligopeptides containing the appropriate consensus sequence are also cleaved.. It catalyses the reaction Hydrolyzes a Gly-|-Gly bond at its own C-terminus, commonly in the sequence -Tyr-Xaa-Val-Gly-|-Gly, in the processing of the potyviral polyprotein.. Functionally, required for aphid transmission and also has proteolytic activity. Only cleaves a Gly-Gly dipeptide at its own C-terminus. Interacts with virions and aphid stylets. Acts as a suppressor of RNA-mediated gene silencing, also known as post-transcriptional gene silencing (PTGS), a mechanism of plant viral defense that limits the accumulation of viral RNAs. May have RNA-binding activity. Has helicase activity. It may be involved in replication. In terms of biological role, indispensable for virus replication. Its function is as follows. Mediates the cap-independent, EIF4E-dependent translation of viral genomic RNAs. Binds to the cap-binding site of host EIF4E and thus interferes with the host EIF4E-dependent mRNA export and translation. VPg-RNA directly binds EIF4E and is a template for transcription. Also forms trimeric complexes with EIF4E-EIF4G, which are templates for translation. Functionally, has RNA-binding and proteolytic activities. An RNA-dependent RNA polymerase that plays an essential role in the virus replication. In terms of biological role, involved in aphid transmission, cell-to-cell and systemis movement, encapsidation of the viral RNA and in the regulation of viral RNA amplification. This is Genome polyprotein from Zucchini yellow mosaic virus (strain Reunion Island) (ZYMV).